The following is a 361-amino-acid chain: 1-deoxy-D-xylulose 5-phosphate reductoisomerase (361 aa).

NADPH contacts are provided by threonine 12, glycine 13, serine 14, isoleucine 15, glycine 38, and asparagine 102. Lysine 103 contacts 1-deoxy-D-xylulose 5-phosphate. Glutamate 104 is an NADPH binding site. Aspartate 126 provides a ligand contact to Mn(2+). 1-deoxy-D-xylulose 5-phosphate contacts are provided by serine 127, glutamate 128, serine 152, and histidine 175. Residue glutamate 128 coordinates Mn(2+). Glycine 181 provides a ligand contact to NADPH. Residues serine 188, asparagine 193, lysine 194, and glutamate 197 each coordinate 1-deoxy-D-xylulose 5-phosphate. Mn(2+) is bound at residue glutamate 197.

Belongs to the DXR family. It depends on Mg(2+) as a cofactor. Mn(2+) is required as a cofactor.

The catalysed reaction is 2-C-methyl-D-erythritol 4-phosphate + NADP(+) = 1-deoxy-D-xylulose 5-phosphate + NADPH + H(+). The protein operates within isoprenoid biosynthesis; isopentenyl diphosphate biosynthesis via DXP pathway; isopentenyl diphosphate from 1-deoxy-D-xylulose 5-phosphate: step 1/6. Catalyzes the NADPH-dependent rearrangement and reduction of 1-deoxy-D-xylulose-5-phosphate (DXP) to 2-C-methyl-D-erythritol 4-phosphate (MEP). This chain is 1-deoxy-D-xylulose 5-phosphate reductoisomerase, found in Leifsonia xyli subsp. xyli (strain CTCB07).